The primary structure comprises 300 residues: MTLTENVMKPQIQRFTRDHDPKVLWQVVEEDGAVIIEGFLPHEVIQKFDCELDVRSKATKGGEMNQEFYQMPVPTTTKWMNDLTATCPTFRHEILNNDILHSLCNVAFEPHGDYWLLNGMAMEMMPGNPTQQIHNDHGTHPILQYLRPDAPAPVFSIITAVTEFTESNGATRVILGSHRWPQGQKAKDDQAVRAALQPGDALVMHRSTKHGGAAHDADNQDHRRLLLTCMGTCQLAPYETNVTVPRPIVESMTPLAQKMIGWRSTRPVISNVTGLNTVRMKHLENQIELKSNVPLNVGGC.

Fe cation-binding residues include His134, Asp136, and His210.

The protein belongs to the PhyH family. Homodimer. Requires Fe cation as cofactor.

The enzyme catalyses okaramine A + 2-oxoglutarate + AH2 + O2 = 12-deshydroxyl okaramine E + succinate + A + CO2 + H2O. The catalysed reaction is 12-deshydroxyl okaramine E + 2-oxoglutarate + O2 = okaramine E + succinate + CO2. It carries out the reaction okaramine A + 2-oxoglutarate + O2 = okaramine E + succinate + CO2. It functions in the pathway alkaloid biosynthesis. Its pathway is secondary metabolite biosynthesis; terpenoid biosynthesis. Its function is as follows. Iron/alpha-ketoglutarate-dependent dioxygenase; part of the gene cluster that mediates the biosynthesis of okaramine B, a prenylated indole alkaloid that possesses an unusual octacyclic ring system, including a four-membered azetidine ring and an eight-membered azocine ring, and that exhibits insecticidal activity against silkworm larvae. Within the pathway, okaE forms the unusual 2-dimethyl-3-methyl-azetidine ring to yield 12-deshydroxyl okaramine E from okaramine A. OkaE also catalyzes the hydroxylation of 12-deshydroxyl okaramine E to produce okaramine E. The biosynthesis begins with the NRPS okaA that condenses two tryptophan molecules into cyclo(L-Trp-L-Trp). Prenylation by the prenyltransferase okaC then leads to the formation of cyclo(N8-(alpha,alpha-dimethylallyl)-L-Trp-6a-(alpha,alpha-dime-thylallyl)-L-Trp). This is followed by indole 2,3-epoxidation by the FAD-dependent monooxygenase okaB to facilitate the formation of the hexahydropyrrolo[2,3-b]indole (HPI) moiety of okaramine C. The cytochrome P450 monooxygenase okaD then likely catalyzes formation of the eight-membered ring of okaramine A. The dioxygenase okaE further forms the unusual 2-dimethyl-3-methyl-azetidine ring to yield 12-deshydroxyl okaramine E, as well as the hydroxylation of 12-deshydroxyl okaramine E to produce okaramine E. The cytochrome P450 monoxygenase okaG converts 12-deshydroxyl okaramine E into 3-desmethyl okaramine B which is further methylated by the methyltransferase okaF into okaramine B. In a shunt pathway, okaG and okaF together are also able to convert okaramine E into okaramine D. Okaramine H is produced by nonenzymatic conversion from okaramine A. This Penicillium ochrochloron protein is Iron/alpha-ketoglutarate-dependent dioxygenase okaE.